A 193-amino-acid polypeptide reads, in one-letter code: Ferredoxin-2, mitochondrial (193 aa).

The interval 38–70 is disordered; the sequence is QATPEKLETSNEEEGSSSAQITAGVESDAENQR. Residues 78-180 form the 2Fe-2S ferredoxin-type domain; sequence VEVVFLDRSG…GAEFTLPKIT (103 aa). Residues Cys-115, Cys-121, Cys-124, and Cys-161 each contribute to the [2Fe-2S] cluster site.

It belongs to the adrenodoxin/putidaredoxin family. As to quaternary structure, component of the mitochondrial core iron-sulfur cluster (ISC) complex composed of NFS1, LYRM4, NDUFAB1, ISCU, FXN, and FDX2; this complex is a heterohexamer containing two copies of each monomer. [2Fe-2S] cluster serves as cofactor.

It localises to the mitochondrion. It is found in the mitochondrion matrix. Its function is as follows. Electron donor, of the core iron-sulfur cluster (ISC) assembly complex, that acts to reduce the persulfide into sulfide during [2Fe-2S] clusters assembly on the scaffolding protein ISCU. The core iron-sulfur cluster (ISC) assembly complex is involved in the de novo synthesis of a [2Fe-2S] cluster, the first step of the mitochondrial iron-sulfur protein biogenesis. This process is initiated by the cysteine desulfurase complex (NFS1:LYRM4:NDUFAB1) that produces persulfide which is delivered on the scaffold protein ISCU in a FXN-dependent manner. Then this complex is stabilized by FDX2 which provides reducing equivalents to accomplish the [2Fe-2S] cluster assembly. Finally, the [2Fe-2S] cluster is transferred from ISCU to chaperone proteins, including HSCB, HSPA9 and GLRX5. Essential for coenzyme Q biosynthesis: together with FDXR, transfers the electrons required for the hydroxylation reaction performed by COQ6. This chain is Ferredoxin-2, mitochondrial, found in Xenopus laevis (African clawed frog).